Reading from the N-terminus, the 465-residue chain is MFIPVIMAGGSGSRLWPLSRSAFPKQFLSLDSSSQHTMLQATIERLQGLPIAEPIVISNEDHRFIVAEQIRRYGKKSRIILEPAGRNTAPAIALAAFTAIEQEDDPVLLVLAADHFVKNKSAFQAAISQAAQQAEAGKLATFGIVPTTPETGYGYIHRGEEVTQGTYEINSFVEKPQLNIAEQYLASGEYYWNSGCFMFKASVFLNELKQHSPEIYRQCELAMQGLSHDYDFIRVGVEEFLKCPDDSIDYAVMEHTKLGVVVSMDAGWSDVGSWSALWEVSDKDADGNVCQGDAILSGTSNCYIYAPNKLVAAVGLKDIVVVETKDAVLVADKNQVQEVKKIVEHLKAENRAEYREHRERYRPWGKSDAIDKGERYKVNRITVEPGKKQSLQMHYHRAEHWVVVSGTAKVTCEGNVKVITENQSLYIPIGTNHMIENPGKIPLELIEIQSGSYLNEDDVVRFEDK.

The protein belongs to the mannose-6-phosphate isomerase type 2 family.

The catalysed reaction is alpha-D-mannose 1-phosphate + GTP + H(+) = GDP-alpha-D-mannose + diphosphate. It participates in nucleotide-sugar biosynthesis; GDP-alpha-D-mannose biosynthesis; GDP-alpha-D-mannose from alpha-D-mannose 1-phosphate (GTP route): step 1/1. Its pathway is bacterial outer membrane biogenesis; LPS O-antigen biosynthesis. This chain is Putative mannose-1-phosphate guanylyltransferase (rfbA), found in Vibrio cholerae serotype O1 (strain ATCC 39315 / El Tor Inaba N16961).